Here is a 328-residue protein sequence, read N- to C-terminus: Malate dehydrogenase (328 aa).

12–18 (GAAGQIG) is an NAD(+) binding site. Residues Arg-95 and Arg-101 each contribute to the substrate site. NAD(+) is bound by residues Asn-108, Gln-115, and 132–134 (VGN). 2 residues coordinate substrate: Asn-134 and Arg-165. The active-site Proton acceptor is the His-190.

It belongs to the LDH/MDH superfamily. MDH type 2 family.

It catalyses the reaction (S)-malate + NAD(+) = oxaloacetate + NADH + H(+). Functionally, catalyzes the reversible oxidation of malate to oxaloacetate. This Polaromonas naphthalenivorans (strain CJ2) protein is Malate dehydrogenase.